Consider the following 396-residue polypeptide: S-adenosylmethionine synthase (396 aa).

H16 lines the ATP pocket. D18 contacts Mg(2+). E44 serves as a coordination point for K(+). Residues E57 and Q100 each coordinate L-methionine. The interval 100-110 is flexible loop; it reads QSVDIAQGVDR. Residues 165–167, D240, 246–247, A263, and K267 each bind ATP; these read DAK and RK. D240 is a binding site for L-methionine. K271 is a binding site for L-methionine.

It belongs to the AdoMet synthase family. Homotetramer; dimer of dimers. Requires Mg(2+) as cofactor. K(+) is required as a cofactor.

It localises to the cytoplasm. It catalyses the reaction L-methionine + ATP + H2O = S-adenosyl-L-methionine + phosphate + diphosphate. It functions in the pathway amino-acid biosynthesis; S-adenosyl-L-methionine biosynthesis; S-adenosyl-L-methionine from L-methionine: step 1/1. Its function is as follows. Catalyzes the formation of S-adenosylmethionine (AdoMet) from methionine and ATP. The overall synthetic reaction is composed of two sequential steps, AdoMet formation and the subsequent tripolyphosphate hydrolysis which occurs prior to release of AdoMet from the enzyme. This is S-adenosylmethionine synthase from Pseudomonas savastanoi pv. phaseolicola (strain 1448A / Race 6) (Pseudomonas syringae pv. phaseolicola (strain 1448A / Race 6)).